The sequence spans 943 residues: Isoleucine--tRNA ligase (943 aa).

A 'HIGH' region motif is present at residues 58–68 (PYANGTIHIGH). Glu567 provides a ligand contact to L-isoleucyl-5'-AMP. The 'KMSKS' region signature appears at 608-612 (KMSKS). An ATP-binding site is contributed by Lys611. Positions 906, 909, 926, and 929 each coordinate Zn(2+).

The protein belongs to the class-I aminoacyl-tRNA synthetase family. IleS type 1 subfamily. Monomer. It depends on Zn(2+) as a cofactor.

The protein localises to the cytoplasm. The enzyme catalyses tRNA(Ile) + L-isoleucine + ATP = L-isoleucyl-tRNA(Ile) + AMP + diphosphate. Catalyzes the attachment of isoleucine to tRNA(Ile). As IleRS can inadvertently accommodate and process structurally similar amino acids such as valine, to avoid such errors it has two additional distinct tRNA(Ile)-dependent editing activities. One activity is designated as 'pretransfer' editing and involves the hydrolysis of activated Val-AMP. The other activity is designated 'posttransfer' editing and involves deacylation of mischarged Val-tRNA(Ile). The sequence is that of Isoleucine--tRNA ligase from Pseudomonas syringae pv. tomato (strain ATCC BAA-871 / DC3000).